Consider the following 318-residue polypeptide: L-lactate dehydrogenase 1 (318 aa).

NAD(+) contacts are provided by residues Val-17, Asp-38, Lys-43, Tyr-69, and Gly-83–Ala-84. Substrate-binding positions include Gln-86, Arg-92, and Asn-124–Asp-127. NAD(+) contacts are provided by residues Ala-122–Asn-124 and Ser-147. Asp-152–Arg-155 contacts substrate. Beta-D-fructose 1,6-bisphosphate-binding residues include Arg-157 and His-172. His-179 acts as the Proton acceptor in catalysis. Tyr-224 is subject to Phosphotyrosine. Residue Thr-233 coordinates substrate.

It belongs to the LDH/MDH superfamily. LDH family. As to quaternary structure, homotetramer.

Its subcellular location is the cytoplasm. The catalysed reaction is (S)-lactate + NAD(+) = pyruvate + NADH + H(+). It participates in fermentation; pyruvate fermentation to lactate; (S)-lactate from pyruvate: step 1/1. With respect to regulation, allosterically activated by fructose 1,6-bisphosphate (FBP). In terms of biological role, catalyzes the conversion of lactate to pyruvate. This is L-lactate dehydrogenase 1 from Peribacillus psychrosaccharolyticus (Bacillus psychrosaccharolyticus).